We begin with the raw amino-acid sequence, 108 residues long: Urease subunit beta (108 aa).

It belongs to the urease beta subunit family. In terms of assembly, heterotrimer of UreA (gamma), UreB (beta) and UreC (alpha) subunits. Three heterotrimers associate to form the active enzyme.

It localises to the cytoplasm. The catalysed reaction is urea + 2 H2O + H(+) = hydrogencarbonate + 2 NH4(+). It participates in nitrogen metabolism; urea degradation; CO(2) and NH(3) from urea (urease route): step 1/1. The chain is Urease subunit beta from Chromohalobacter salexigens (strain ATCC BAA-138 / DSM 3043 / CIP 106854 / NCIMB 13768 / 1H11).